A 100-amino-acid chain; its full sequence is SAGA-associated factor 11 (100 aa).

The SGF11-type zinc-finger motif lies at 73-94; it reads FQCENCGRSIAGGRFAQHMTKC.

This sequence belongs to the SGF11 family. As to quaternary structure, component of the 1.8 MDa SAGA transcription coactivator-HAT complex. SAGA is built of 5 distinct domains with specialized functions. Within the SAGA complex, SUS1, SGF11, SGF73 and UBP8 form an additional subcomplex of SAGA called the DUB module (deubiquitination module). Interacts directly with SGF73, SUS1 and UBP8.

Its subcellular location is the nucleus. Functions as a component of the transcription regulatory histone acetylation (HAT) complex SAGA. At the promoters, SAGA is required for recruitment of the basal transcription machinery. It influences RNA polymerase II transcriptional activity through different activities such as TBP interaction and promoter selectivity, interaction with transcription activators, and chromatin modification through histone acetylation and deubiquitination. SAGA acetylates nucleosomal histone H3 to some extent (to form H3K9ac, H3K14ac, H3K18ac and H3K23ac). SAGA interacts with DNA via upstream activating sequences (UASs). Involved in transcriptional regulation of a subset of SAGA-regulated genes. Within the SAGA complex, participates in a subcomplex, that specifically deubiquitinates histones H2B. In Debaryomyces hansenii (strain ATCC 36239 / CBS 767 / BCRC 21394 / JCM 1990 / NBRC 0083 / IGC 2968) (Yeast), this protein is SAGA-associated factor 11.